Reading from the N-terminus, the 505-residue chain is Photosystem II CP47 reaction center protein (505 aa).

At 1–19 the chain is on the cytoplasmic side; that stretch reads GLPWYRVHTVLINDPGRLI. Residues His-8, His-22, His-25, His-99, and His-113 each coordinate chlorophyll a. The helical transmembrane segment at 20 to 35 threads the bilayer; sequence AAHLMHTALVAGWAGS. Over 36–99 the chain is Lumenal; that stretch reads MALYELATFD…WSFEGVALAH (64 aa). Residues 100–114 form a helical membrane-spanning segment; the sequence is IVLSGLLFLAACWHW. Residues 115-138 lie on the Cytoplasmic side of the membrane; sequence VYWDLELFRDPRTGEPALDLPKMF. Residues 139–155 traverse the membrane as a helical segment; sequence GIHLFLAGLLCFGFGAF. Chlorophyll a is bound by residues His-141, His-156, His-200, His-201, and His-215. Residues 156 to 201 are Lumenal-facing; that stretch reads HLTGLFGPGMWVSDPYGLTGSVQPVAPEWGPDGFNPYNPGGVVAHH. The helical transmembrane segment at 202 to 217 threads the bilayer; it reads IAAGIVGIIAGLFHIL. Residues 218-235 are Cytoplasmic-facing; it reads VRPPQRLYKALRMGNIET. The chain crosses the membrane as a helical span at residues 236-251; that stretch reads VLSSSIAAVFFAAFVV. Residues 252-455 lie on the Lumenal side of the membrane; it reads AGTMWYGSAT…PRGWFTFAHA (204 aa). Chlorophyll a contacts are provided by His-454, His-465, and His-468. Residues 456 to 471 form a helical membrane-spanning segment; the sequence is VFALLFFFGHIWHGAR. The Cytoplasmic segment spans residues 472–505; sequence TLFRDVFSGIDPELSPEQVEWGFYQKVGDVTTRK.

This sequence belongs to the PsbB/PsbC family. PsbB subfamily. PSII is composed of 1 copy each of membrane proteins PsbA, PsbB, PsbC, PsbD, PsbE, PsbF, PsbH, PsbI, PsbJ, PsbK, PsbL, PsbM, PsbT, PsbX, PsbY, PsbZ, Psb30/Ycf12, peripheral proteins PsbO, CyanoQ (PsbQ), PsbU, PsbV and a large number of cofactors. It forms dimeric complexes. Requires Binds multiple chlorophylls. PSII binds additional chlorophylls, carotenoids and specific lipids. as cofactor.

It localises to the cellular thylakoid membrane. One of the components of the core complex of photosystem II (PSII). It binds chlorophyll and helps catalyze the primary light-induced photochemical processes of PSII. PSII is a light-driven water:plastoquinone oxidoreductase, using light energy to abstract electrons from H(2)O, generating O(2) and a proton gradient subsequently used for ATP formation. The chain is Photosystem II CP47 reaction center protein from Thermostichus vulcanus (Synechococcus vulcanus).